A 353-amino-acid polypeptide reads, in one-letter code: Guanine nucleotide-binding protein subunit alpha (353 aa).

Positions 1-21 are disordered; that stretch reads MGCGMSTEEKEGKARNEEIEN. A lipid anchor (N-myristoyl glycine) is attached at glycine 2. Cysteine 3 is lipidated: S-palmitoyl cysteine. The segment covering 7–21 has biased composition (basic and acidic residues); it reads TEEKEGKARNEEIEN. One can recognise a G-alpha domain in the interval 32 to 353; it reads NEIKMLLLGA…QENLRLCGLI (322 aa). A G1 motif region spans residues 35-48; sequence KMLLLGAGESGKST. 14 residues coordinate GTP: glutamate 43, serine 44, glycine 45, lysine 46, serine 47, threonine 48, aspartate 150, leucine 175, threonine 181, glycine 203, asparagine 269, lysine 270, aspartate 272, and alanine 325. Serine 47 lines the Mg(2+) pocket. The interval 173-181 is G2 motif; sequence DVLRSRVKT. Threonine 181 contacts Mg(2+). The tract at residues 196–205 is G3 motif; sequence YRMFDVGGQR. The interval 265 to 272 is G4 motif; the sequence is ILFLNKID. Residues 323 to 328 form a G5 motif region; sequence TCATDT.

This sequence belongs to the G-alpha family. G(q) subfamily. G proteins are composed of 3 units; alpha, beta and gamma. The alpha chain contains the guanine nucleotide binding site. Mg(2+) is required as a cofactor.

In terms of biological role, guanine nucleotide-binding proteins (G proteins) are involved as modulators or transducers in various transmembrane signaling systems. Plays a role in pathogenicity, specifically in appressorium formation in rice blast disease. Also involved in mating. In Pyricularia oryzae (strain 70-15 / ATCC MYA-4617 / FGSC 8958) (Rice blast fungus), this protein is Guanine nucleotide-binding protein subunit alpha (MAGB).